The chain runs to 351 residues: Peptide chain release factor 1 (351 aa).

Gln233 bears the N5-methylglutamine mark.

The protein belongs to the prokaryotic/mitochondrial release factor family. In terms of processing, methylated by PrmC. Methylation increases the termination efficiency of RF1.

The protein localises to the cytoplasm. In terms of biological role, peptide chain release factor 1 directs the termination of translation in response to the peptide chain termination codons UAG and UAA. This Treponema pallidum (strain Nichols) protein is Peptide chain release factor 1 (prfA).